The chain runs to 341 residues: DNA-directed RNA polymerase subunit alpha (341 aa).

The tract at residues 1 to 233 (MIRDEIPISA…NLFIPFLHAE (233 aa)) is alpha N-terminal domain (alpha-NTD). An alpha C-terminal domain (alpha-CTD) region spans residues 265 to 341 (TKGVTFKHIF…NLPKNKLHFH (77 aa)).

This sequence belongs to the RNA polymerase alpha chain family. As to quaternary structure, in plastids the minimal PEP RNA polymerase catalytic core is composed of four subunits: alpha, beta, beta', and beta''. When a (nuclear-encoded) sigma factor is associated with the core the holoenzyme is formed, which can initiate transcription.

The protein resides in the plastid. It localises to the chloroplast. The catalysed reaction is RNA(n) + a ribonucleoside 5'-triphosphate = RNA(n+1) + diphosphate. DNA-dependent RNA polymerase catalyzes the transcription of DNA into RNA using the four ribonucleoside triphosphates as substrates. This Takakia lepidozioides (Moss) protein is DNA-directed RNA polymerase subunit alpha.